The chain runs to 475 residues: Cytosolic non-specific dipeptidase (475 aa).

Ala2 bears the N-acetylalanine mark. Lys9 is modified (N6-acetyllysine). Ser58 bears the Phosphoserine mark. His99 contacts Mn(2+). Asp101 is an active-site residue. Asp132 contributes to the Mn(2+) binding site. The active-site Proton acceptor is Glu166. Residues 166-167, Asp195, and His228 contribute to the substrate site; that span reads EE. Mn(2+) contacts are provided by Glu167 and Asp195. Ser299 carries the post-translational modification Phosphoserine. Residues Thr330, Arg343, Ser417, and His445 each coordinate substrate. His445 is a binding site for Mn(2+).

This sequence belongs to the peptidase M20A family. Homodimer. It depends on Mn(2+) as a cofactor. As to expression, ubiquitously expressed with higher levels in kidney and liver (at protein level). Expressed in peripheral blood leukocytes. Expressed in gastric mucosa and down-regulated in gastric cancer mucosal tissues (at protein level). In terms of tissue distribution, broadly expressed in fetal tissues. Expressed in adult liver and placenta.

It is found in the cytoplasm. The catalysed reaction is Hydrolysis of dipeptides, preferentially hydrophobic dipeptides including prolyl amino acids.. It carries out the reaction L-threonyl-L-threonine + H2O = 2 L-threonine. The enzyme catalyses L-threonyl-L-serine + H2O = L-threonine + L-serine. It catalyses the reaction L-seryl-L-threonine + H2O = L-threonine + L-serine. The catalysed reaction is L-cysteinylglycine + H2O = L-cysteine + glycine. It carries out the reaction L-alanyl-L-cysteine + H2O = L-cysteine + L-alanine. The enzyme catalyses (S)-lactate + L-phenylalanine = N-[(S)-lactoyl]-L-phenylalanine + H2O. Its activity is regulated as follows. Inhibited by p-hydroxymercurybenzoate. The inhibitory concentration 50% (IC(50)) is 13 uM. Inhibited by bestatin. The inhibitory concentration 50% (IC(50)) is 7 nM at pH 9.5. In terms of biological role, catalyzes the peptide bond hydrolysis in dipeptides, displaying a non-redundant activity toward threonyl dipeptides. Mediates threonyl dipeptide catabolism in a tissue-specific way. Has high dipeptidase activity toward cysteinylglycine, an intermediate metabolite in glutathione metabolism. Metabolizes N-lactoyl-amino acids, both through hydrolysis to form lactic acid and amino acids, as well as through their formation by reverse proteolysis. Plays a role in the regulation of cell cycle arrest and apoptosis. The protein is Cytosolic non-specific dipeptidase of Homo sapiens (Human).